A 487-amino-acid polypeptide reads, in one-letter code: GTPase Der (487 aa).

2 EngA-type G domains span residues 3 to 166 (PVIA…PRDA) and 193 to 366 (IKIA…QSAV). GTP-binding positions include 9 to 16 (GRPNVGKS), 56 to 60 (DTGGI), 118 to 121 (NKID), 199 to 206 (GRPNVGKS), 246 to 250 (DTAGV), and 311 to 314 (NKWD). The KH-like domain occupies 367–451 (TRWPTSRLTQ…PIRIEYKGGE (85 aa)). The segment covering 448 to 461 (KGGENPYEGKKNTL) has biased composition (basic and acidic residues). Positions 448 to 487 (KGGENPYEGKKNTLTDRQVNKKRRLMSHHKKAEKKRRDKR) are disordered. Over residues 467-487 (NKKRRLMSHHKKAEKKRRDKR) the composition is skewed to basic residues.

This sequence belongs to the TRAFAC class TrmE-Era-EngA-EngB-Septin-like GTPase superfamily. EngA (Der) GTPase family. Associates with the 50S ribosomal subunit.

Its function is as follows. GTPase that plays an essential role in the late steps of ribosome biogenesis. The sequence is that of GTPase Der from Pseudomonas putida (strain ATCC 700007 / DSM 6899 / JCM 31910 / BCRC 17059 / LMG 24140 / F1).